The sequence spans 375 residues: MSGDYYETLGVDRNASKEDIKRAYRRLARKYHPDINKEAGAEDRFKEINRAYEVLSEPETRARYDQFGEAGVSGAGAAGFDYGDMGGFADIFETIFSGFGGGVGTGSTRRRTGPTRGDDLRLDLKLDFREAIFGGEKEIRIPHLETCQVCNGSGAKPGTGSRTCSTCNGAGQVRRATRTPFGSFAQVSTCPDCNGAGQVIEQKCDACGGAGRKQETKKLKITIPAGVDNGTRLRVGKEGDAGTRGGTPGDLYVYLFVEPDKEFTREGMNIHSEITISYLQAILGCKLQINTVDGPQELVIPAGTQPNTELMLEDHGVPKLGNSAIRGDHLINVKIAIPTRINNEERELLEKLAHIKGQSHGKGGLEGFLGSLFHK.

A J domain is found at 4–68 (DYYETLGVDR…ETRARYDQFG (65 aa)). A CR-type zinc finger spans residues 134-216 (GGEKEIRIPH…CGGAGRKQET (83 aa)). Residues Cys-147, Cys-150, Cys-164, Cys-167, Cys-190, Cys-193, Cys-204, and Cys-207 each contribute to the Zn(2+) site. 4 CXXCXGXG motif repeats span residues 147–154 (CQVCNGSG), 164–171 (CSTCNGAG), 190–197 (CPDCNGAG), and 204–211 (CDACGGAG).

It belongs to the DnaJ family. In terms of assembly, homodimer. Zn(2+) serves as cofactor.

The protein localises to the cytoplasm. Participates actively in the response to hyperosmotic and heat shock by preventing the aggregation of stress-denatured proteins and by disaggregating proteins, also in an autonomous, DnaK-independent fashion. Unfolded proteins bind initially to DnaJ; upon interaction with the DnaJ-bound protein, DnaK hydrolyzes its bound ATP, resulting in the formation of a stable complex. GrpE releases ADP from DnaK; ATP binding to DnaK triggers the release of the substrate protein, thus completing the reaction cycle. Several rounds of ATP-dependent interactions between DnaJ, DnaK and GrpE are required for fully efficient folding. Also involved, together with DnaK and GrpE, in the DNA replication of plasmids through activation of initiation proteins. This is Chaperone protein DnaJ from Rippkaea orientalis (strain PCC 8801 / RF-1) (Cyanothece sp. (strain PCC 8801)).